Here is a 629-residue protein sequence, read N- to C-terminus: MEVKGQLISSPTFTAPAALFGEAAPLVKSDRLRGLLDRQRALQEALSVKLQELRKVCLQEAELTGQLPPECPLEPGERPQLVRRRPPAARAYPPPHPNPAHHSLCPAEELALEALEREVSVQQQIAAAARRLALAPDLNGEQRRRRRQVQVDALRRLHELEEQLRDFRARLGLPVLQPLPLSAGALVNAQGVCLGTRLAQLSQEDVVLHSESSSLSESGASHDNEEPHSCFPLTERPSPPKAWDQFRAVSGGSPERRAPWKPPPSDIYGDLKSRRNSVASPTSPTRSLPRSASSFEGRSVPATPVLTRGSGPRLCKPEGLHSRQWSGSQDSQMGFPRPDPASDRASLFAARTRRSNSSEALLVDRAAAGGAGSPPAPLAPPAAGPPVCKSSEVLYERPQPVPSFSSRTTGPPDPPRAARPSSAAPASRGAPRLPTVCGDFLLDYPLDRGLPRGSGGAGWGELLPAPEVPGPLSRRDGLLAMLPGPPPIYAADGSSPLLRSKDPNTRAIRSKPSGLPPEAVEGLEVHPNPLLWMPPPTRIPPAGERGGHKNLALEGLRDWYIRNSGLAVGPQRRPMLPHVGPTHTPFLHARCYEVGQSLYGPPSQAPLPHSRSFTAPPVSGRYGGAFTDG.

Residues Arg-31 to Glu-70 are involved in CYTH2-binding. Residues Glu-109 to Leu-173 are a coiled coil. 2 stretches are compositionally biased toward low complexity: residues His-209–Gly-219 and Ala-279–Ser-294. Residues His-209–Asn-356 form a disordered region. Residues Arg-323–Gln-332 show a composition bias toward polar residues. Phosphoserine is present on residues Ser-355 and Ser-357. Disordered regions lie at residues Gln-399–Arg-432 and Pro-602–Gly-629. The span at Ala-418 to Arg-432 shows a compositional bias: low complexity. The residue at position 432 (Arg-432) is an Omega-N-methylarginine.

Interacts with NIN and CEP170; leading to recruit them to centrosomes. Interacts with CYTH2; this interaction is direct and stabilizes CCDC120, possibly by preventing ubiquitination. Ubiquitinated; interaction with CYTH2 may prevent ubiquitination.

The protein localises to the cytoplasm. It localises to the cytoskeleton. It is found in the microtubule organizing center. Its subcellular location is the centrosome. The protein resides in the centriole. The protein localises to the cell projection. It localises to the neuron projection. It is found in the growth cone. Its subcellular location is the endosome. In terms of biological role, centriolar protein required for centriole subdistal appendage assembly and microtubule anchoring in interphase cells. Together with CCDC68, cooperate with subdistal appendage components ODF2, NIN and CEP170 for hierarchical subdistal appendage assembly. Recruits NIN and CEP170 to centrosomes. Also required for neurite growth. Localizes CYTH2 to vesicles to allow its transport along neurites, and subsequent ARF6 activation and neurite growth. This is Coiled-coil domain-containing protein 120 from Mus musculus (Mouse).